We begin with the raw amino-acid sequence, 95 residues long: Small ribosomal subunit protein uS19 (95 aa).

The interval Glu73–Lys95 is disordered.

The protein belongs to the universal ribosomal protein uS19 family.

Protein S19 forms a complex with S13 that binds strongly to the 16S ribosomal RNA. The sequence is that of Small ribosomal subunit protein uS19 from Deinococcus radiodurans (strain ATCC 13939 / DSM 20539 / JCM 16871 / CCUG 27074 / LMG 4051 / NBRC 15346 / NCIMB 9279 / VKM B-1422 / R1).